Reading from the N-terminus, the 339-residue chain is N-acetyl-gamma-glutamyl-phosphate reductase (339 aa).

Cys-145 is a catalytic residue.

It belongs to the NAGSA dehydrogenase family. Type 1 subfamily.

The protein resides in the cytoplasm. The catalysed reaction is N-acetyl-L-glutamate 5-semialdehyde + phosphate + NADP(+) = N-acetyl-L-glutamyl 5-phosphate + NADPH + H(+). It participates in amino-acid biosynthesis; L-arginine biosynthesis; N(2)-acetyl-L-ornithine from L-glutamate: step 3/4. Catalyzes the NADPH-dependent reduction of N-acetyl-5-glutamyl phosphate to yield N-acetyl-L-glutamate 5-semialdehyde. The sequence is that of N-acetyl-gamma-glutamyl-phosphate reductase from Thermotoga sp. (strain RQ2).